A 75-amino-acid polypeptide reads, in one-letter code: Guanine nucleotide-binding protein G(I)/G(S)/G(O) subunit gamma-3 (75 aa).

The residue at position 5 (Thr-5) is a Phosphothreonine. Residue Ser-9 is modified to Phosphoserine. A Phosphothreonine modification is found at Thr-10. Ser-12 is modified (phosphoserine). Residue Cys-72 is modified to Cysteine methyl ester. Cys-72 is lipidated: S-geranylgeranyl cysteine. Residues 73–75 constitute a propeptide, removed in mature form; it reads ALL.

Belongs to the G protein gamma family. In terms of assembly, g proteins are composed of 3 units, alpha, beta and gamma. Forms a complex with GNAO1 and GNB1. Interacts with SCN8A. Abundantly expressed in brain. Low levels in testis.

The protein resides in the cell membrane. Its function is as follows. Guanine nucleotide-binding proteins (G proteins) are involved as a modulator or transducer in various transmembrane signaling systems. The beta and gamma chains are required for the GTPase activity, for replacement of GDP by GTP, and for G protein-effector interaction. This is Guanine nucleotide-binding protein G(I)/G(S)/G(O) subunit gamma-3 (GNG3) from Bos taurus (Bovine).